Consider the following 257-residue polypeptide: MTAAVFFGCAFIAFGPALALYVFTIATEPLRIIFLIAGAFFWLVSLLISSLVWFMARVIIDNKDGPTQKYLLIFGAFVSVYIQEMFRFAYYKLLKKASEGLKSINPGETAPSMRLLAYVSGLGFGIMSGVFSFVNTLSDSLGPGTVGIHGDSPQFFLYSAFMTLVIILLHVFWGIVFFDGCEKKKWGILLIVLLTHLLVSAQTFISSYYGINLASAFIILVLMGTWAFLAAGGSCRSLKLCLLCQDKNFLLYNQRSR.

7 helical membrane-spanning segments follow: residues Val-5–Ile-25, Ile-32–Val-52, Leu-71–Tyr-91, Leu-115–Asn-135, Tyr-158–Phe-178, Trp-186–Ser-206, and Leu-213–Gly-233.

Belongs to the APH-1 family. In terms of assembly, probable component of the gamma-secretase complex, a complex composed of a presenilin homodimer (PSEN1 or PSEN2), nicastrin (NCSTN), APH1 (APH1A or APH1B) and PEN2. Such minimal complex is sufficient for secretase activity, although other components may exist. Interacts with PSEN1 and PSEN2. In terms of tissue distribution, weakly or not expressed in leukocytes, lung, placenta, small intestine, liver, kidney, spleen thymus, colon, skeletal muscle, heart and brain.

The protein resides in the membrane. Probable subunit of the gamma-secretase complex, an endoprotease complex that catalyzes the intramembrane cleavage of integral proteins such as Notch receptors and APP (amyloid-beta precursor protein). It probably represents a stabilizing cofactor for the presenilin homodimer that promotes the formation of a stable complex. Probably present in a minority of gamma-secretase complexes compared to APH1A. This Homo sapiens (Human) protein is Gamma-secretase subunit APH-1B (APH1B).